Here is a 947-residue protein sequence, read N- to C-terminus: Ionotropic receptor 25a (947 aa).

The first 30 residues, 1 to 30, serve as a signal peptide directing secretion; sequence MILMNPKTSKILWLLGFLSLLSSFSLEIAA. Residues 31–562 are Extracellular-facing; the sequence is QTTQNINVLF…SLFKFLTVLE (532 aa). Residues asparagine 78, asparagine 177, asparagine 277, and asparagine 434 are each glycosylated (N-linked (GlcNAc...) asparagine). A helical membrane pass occupies residues 563 to 583; sequence TNVWLCILAAYFFTSFLMWIF. Over 584–641 the chain is Cytoplasmic; it reads DRWSPYSYQNNREKYKDDEEKREFNLKECLWFCMTSLTPQGGGEAPKNLSGRLVAATW. Residues 642-662 form a helical membrane-spanning segment; the sequence is WLFGFIIIASYTANLAAFLTV. Residues 663–858 lie on the Extracellular side of the membrane; sequence SRLDTPVESL…DQSDGISIQN (196 aa). N-linked (GlcNAc...) asparagine glycans are attached at residues asparagine 687, asparagine 715, and asparagine 762. A helical transmembrane segment spans residues 859–879; that stretch reads IGGVFIVIFVGIGMACITLVF. Over 880–947 the chain is Cytoplasmic; the sequence is EYWWYRYRKN…QYPATFKPRF (68 aa).

This sequence belongs to the glutamate-gated ion channel (TC 1.A.10.1) family. As to quaternary structure, interacts with nocte. In the antenna, detected in neurons of the arista and also detected in sacculus neurons which innervate the first and second chambers (at protein level). Throughout the main body of the antenna, expressed in neurons which innervate the coeloconic class of olfactory sensilla (at protein level). Expressed in multiple cells of the dorsal organ including the dorsal organ cool cells (at protein level). Detected in femur and retina. Expressed in a subset of femur chordonotal neurons and antennal Johnston's Organ neurons.

It localises to the cell membrane. The protein resides in the cell projection. Its subcellular location is the axon. The protein localises to the dendrite. It is found in the perikaryon. It localises to the cilium. Functionally, integral part of various neural sensory systems in the antenna that provide the neural basis for the response to environmental changes in temperature (thermosensation), humidity (hygrosensation) and odor detection. Required for odor-evoked electrophysiological responses in multiple neuron classes in the antenna and is likely to function as part of an olfactory receptor complex with Ir76a and Ir76b. Together with Ir21a and Ir93a, mediates the response of the larval dorsal organ cool cells, a trio of cool-responsive neurons, to cooling and is required for cool avoidance behavior. Required in chordonotal organ neurons for behavioral synchronization to low-amplitude temperature cycles and mediates circadian clock resetting by temperature. Together with Ir40a and Ir93a, mediates the response of the hydrosensory sacculus neurons to changes in relative humidity, and is required for dry detection and humidiy preference behavior. This Drosophila melanogaster (Fruit fly) protein is Ionotropic receptor 25a.